A 708-amino-acid chain; its full sequence is MPSTLTINGKAPIVAYAELIAARIVNALAPNSIAIKLVDDKKAPAAKLDDATEDVFNKITSKFAAIFDNGDKEQVAKWVNLAQKELVIKNFAKLSQSLETLDSQLNLRTFILGGLKYSAADVACWGALRSNGMCGSIIKNKVDVNVSRWYTLLEMDPIFGEAHDFLSKSLLELKKSANVGKKKETHKANFEIDLPDAKMGEVVTRFPPEPSGYLHIGHAKAALLNQYFAQAYKGKLIIRFDDTNPSKEKEEFQDSILEDLDLLGIKGDRITYSSDYFQEMYDYCVQMIKDGKAYCDDTPTEKMREERMDGVASARRDRSVEENLRIFTEEMKNGTEEGLKNCVRAKIDYKALNKTLRDPVIYRCNLTPHHRTGSTWKIYPTYDFCVPIVDAIEGVTHALRTIEYRDRNAQYDWMLQALRLRKVHIWDFARINFVRTLLSKRKLQWMVDKDLVGNWDDPRFPTVRGVRRRGMTVEGLRNFVLSQGPSRNVINLEWNLIWAFNKKVIDPIAPRHTAIVNPVKIHLEGSEAPQEPKIEMKPKHKKNPAVGEKKVIYYKDIVVDKDDADVINVDEEVTLMDWGNVIITKKNDDGSMVAKLNLEGDFKKTKHKLTWLADTKDVVPVDLVDFDHLITKDRLEEDESFEDFLTPQTEFHTDAIADLNVKDMKIGDIIQFERKGYYRLDALPKDGKPYVFFTIPDGKSVNKYGAKK.

Interaction with ARC1 stretches follow at residues 106-115 (NLRTFILGGL) and 141-157 (KVDV…EMDP). L-glutamate is bound at residue 205-207 (RFP). The short motif at 210–219 (PSGYLHIGHA) is the 'HIGH' region element. An ATP-binding site is contributed by histidine 215. Residue aspartate 241 participates in L-glutamate binding. Residue threonine 300 is modified to Phosphothreonine. L-glutamate contacts are provided by residues 382-386 (YDFCV) and arginine 400. Residues glutamate 403 and 437–441 (LLSKR) each bind ATP. The 'KMSKS' region motif lies at 437–441 (LLSKR).

This sequence belongs to the class-I aminoacyl-tRNA synthetase family. Glutamate--tRNA ligase type 2 subfamily. Component of a yeast aminoacyl-tRNA synthase (aaRS) complex formed by methionyl-tRNA synthase MES1, glutamyl-tRNA synthase GUS1 and the tRNA aminoacylation cofactor ARC1 in a stoichiometric complex. Interacts (via N-ter) with ARC1 (via N-ter). Can also form a stable binary complex with ARC1 that is functional in terms of aminoacylation. ARC1 increases the affinity for cognate tRNAs due to the presence of a tRNA binding domain in the middle and C-terminal part of ARC1.

It is found in the cytoplasm. The protein resides in the mitochondrion. The enzyme catalyses tRNA(Glu) + L-glutamate + ATP = L-glutamyl-tRNA(Glu) + AMP + diphosphate. Catalyzes the attachment of glutamate to tRNA(Glu) in a two-step reaction: glutamate is first activated by ATP to form Glu-AMP and then transferred to the acceptor end of tRNA(Glu). In mitochondria, constitutes the nondiscriminating glutamyl-tRNA synthase that generates the mitochondrial mischarged glutamyl-tRNA(Gln) substrate for the tRNA-dependent amidotransferase (AdT), which generates mitochondrial glutaminyl-tRNA(Gln) by transamidation of glutamyl-tRNA(Gln). The sequence is that of Glutamate--tRNA ligase, cytoplasmic (GUS1) from Saccharomyces cerevisiae (strain ATCC 204508 / S288c) (Baker's yeast).